Reading from the N-terminus, the 253-residue chain is MRTDINCDMGESFGSYRIGEDEKVMPCITSANVACGWHAGDPMIMARTLELAARHGVAVGAHPGYPDLLGYGRRNLETFPGEVRNYILYQIGALAAFAGAAGVKLQHVKPHGAMYNLAARDERTAKEVIEAVKAYDPGLILVTLAGSLCAQMAADAGLRVAAEVFPDRAYLTTGQLAPRSMPGAVIHDPEQVKERVLKLVRTGMMTSIDGRDLALRADTLCVHGDNPGACLLAASIREALETSGVRVVAMGAQ.

The protein belongs to the LamB/PxpA family. As to quaternary structure, forms a complex composed of PxpA, PxpB and PxpC.

The enzyme catalyses 5-oxo-L-proline + ATP + 2 H2O = L-glutamate + ADP + phosphate + H(+). Functionally, catalyzes the cleavage of 5-oxoproline to form L-glutamate coupled to the hydrolysis of ATP to ADP and inorganic phosphate. The sequence is that of 5-oxoprolinase subunit A from Syntrophobacter fumaroxidans (strain DSM 10017 / MPOB).